A 185-amino-acid chain; its full sequence is Adenine phosphoribosyltransferase (185 aa).

This sequence belongs to the purine/pyrimidine phosphoribosyltransferase family.

The protein resides in the cytoplasm. The catalysed reaction is AMP + diphosphate = 5-phospho-alpha-D-ribose 1-diphosphate + adenine. It functions in the pathway purine metabolism; AMP biosynthesis via salvage pathway; AMP from adenine: step 1/1. Functionally, catalyzes a salvage reaction resulting in the formation of AMP, that is energically less costly than de novo synthesis. The protein is Adenine phosphoribosyltransferase (aprt-1) of Caenorhabditis elegans.